Reading from the N-terminus, the 347-residue chain is 5-deoxyribose 1-phosphate isomerase (347 aa).

Residues 48–50, Arg91, and Gln198 contribute to the substrate site; that span reads RGA. Asp239 acts as the Proton donor in catalysis. Substrate is bound at residue 249-250; sequence NK.

Belongs to the EIF-2B alpha/beta/delta subunits family. DrdI subfamily.

It carries out the reaction 5-deoxy-alpha-D-ribose 1-phosphate = 5-deoxy-D-ribulose 1-phosphate. It functions in the pathway carbohydrate degradation. In terms of biological role, catalyzes the isomerization of 5-deoxy-alpha-D-ribose 1-phosphate to 5-deoxy-D-ribulose 1-phosphate, as part of a 5-deoxyribose salvage pathway that recycles this toxic radical SAM enzyme by-product to mainstream metabolites. This Bacillus cereus (strain ATCC 14579 / DSM 31 / CCUG 7414 / JCM 2152 / NBRC 15305 / NCIMB 9373 / NCTC 2599 / NRRL B-3711) protein is 5-deoxyribose 1-phosphate isomerase.